A 550-amino-acid polypeptide reads, in one-letter code: Arginine--tRNA ligase (550 aa).

A 'HIGH' region motif is present at residues alanine 130–glycine 140.

Belongs to the class-I aminoacyl-tRNA synthetase family. In terms of assembly, monomer.

It localises to the cytoplasm. The catalysed reaction is tRNA(Arg) + L-arginine + ATP = L-arginyl-tRNA(Arg) + AMP + diphosphate. This chain is Arginine--tRNA ligase, found in Corynebacterium glutamicum (strain R).